The chain runs to 450 residues: Tubulin alpha chain (450 aa).

Residue Gln-11 coordinates GTP. The residue at position 40 (Lys-40) is an N6-acetyllysine. Residues Glu-71, Ser-140, Gly-144, Thr-145, Thr-179, Asn-206, and Asn-228 each coordinate GTP. Position 71 (Glu-71) interacts with Mg(2+). Residue Glu-254 is part of the active site. Residues 431–450 are disordered; sequence DYEEVGTDSVGEEDEEGEEY.

The protein belongs to the tubulin family. Dimer of alpha and beta chains. A typical microtubule is a hollow water-filled tube with an outer diameter of 25 nm and an inner diameter of 15 nM. Alpha-beta heterodimers associate head-to-tail to form protofilaments running lengthwise along the microtubule wall with the beta-tubulin subunit facing the microtubule plus end conferring a structural polarity. Microtubules usually have 13 protofilaments but different protofilament numbers can be found in some organisms and specialized cells. Requires Mg(2+) as cofactor. In terms of processing, some glutamate residues at the C-terminus are polyglycylated, resulting in polyglycine chains on the gamma-carboxyl group. Glycylation is mainly limited to tubulin incorporated into axonemes (cilia and flagella) whereas glutamylation is prevalent in neuronal cells, centrioles, axonemes, and the mitotic spindle. Both modifications can coexist on the same protein on adjacent residues, and lowering polyglycylation levels increases polyglutamylation, and reciprocally. The precise function of polyglycylation is still unclear. Post-translationally, some glutamate residues at the C-terminus are polyglutamylated, resulting in polyglutamate chains on the gamma-carboxyl group. Polyglutamylation plays a key role in microtubule severing by spastin (SPAST). SPAST preferentially recognizes and acts on microtubules decorated with short polyglutamate tails: severing activity by SPAST increases as the number of glutamates per tubulin rises from one to eight, but decreases beyond this glutamylation threshold. Acetylation of alpha chains at Lys-40 is located inside the microtubule lumen. This modification has been correlated with increased microtubule stability, intracellular transport and ciliary assembly. In terms of processing, undergoes a tyrosination/detyrosination cycle, the cyclic removal and re-addition of a C-terminal tyrosine residue by the enzymes tubulin tyrosine carboxypeptidase (MATCAP, VASH1 or VASH2) and tubulin tyrosine ligase (TTL), respectively. Post-translationally, tyrosination promotes microtubule interaction with CAP-Gly microtubule plus-end tracking proteins. Tyrosinated tubulins regulate the initiation of dynein-driven motility. Detyrosination is involved in metaphase plate congression by guiding chromosomes during mitosis. Detyrosination increases microtubules-dependent mechanotransduction in dystrophic cardiac and skeletal muscle. In cardiomyocytes, detyrosinated microtubules are required to resist to contractile compression during contraction.

It is found in the cytoplasm. The protein localises to the cytoskeleton. It carries out the reaction GTP + H2O = GDP + phosphate + H(+). Its function is as follows. Tubulin is the major constituent of microtubules, a cylinder consisting of laterally associated linear protofilaments composed of alpha- and beta-tubulin heterodimers. Microtubules grow by the addition of GTP-tubulin dimers to the microtubule end, where a stabilizing cap forms. Below the cap, tubulin dimers are in GDP-bound state, owing to GTPase activity of alpha-tubulin. This Oncorhynchus keta (Chum salmon) protein is Tubulin alpha chain.